The sequence spans 287 residues: Aromatic amino acid exporter YddG (287 aa).

At 1–5 the chain is on the cytoplasmic side; that stretch reads MSRSS. The helical transmembrane segment at 6-24 threads the bilayer; the sequence is ATLIGFTAILLWSTLALAT. Positions 7 to 136 constitute an EamA 1 domain; sequence TLIGFTAILL…MGLAGTVVLL (130 aa). The Periplasmic segment spans residues 25–31; sequence SSTGAVP. Residues 32-54 traverse the membrane as a helical segment; the sequence is PFLLTALTFTIGGAVGIAAGLAR. Residues 55-65 are Cytoplasmic-facing; sequence GVGLSVLRQPW. Residues 66–86 form a helical membrane-spanning segment; it reads PVWVHGIGGLFGYHFFYFSAL. The Periplasmic segment spans residues 87 to 90; that stretch reads KLAP. The helical transmembrane segment at 91 to 111 threads the bilayer; that stretch reads PAEAGLVAYLWPLLIVLFSAF. Topologically, residues 112–118 are cytoplasmic; it reads LPGERLR. A helical transmembrane segment spans residues 119 to 139; sequence PAHVAGALMGLAGTVVLLGAR. At 140 to 149 the chain is on the periplasmic side; that stretch reads AGGFGFAPEY. Residues 150 to 170 form a helical membrane-spanning segment; sequence VPGYLAAAACAVIWSVYSVAS. The 131-residue stretch at 151–281 folds into the EamA 2 domain; sequence PGYLAAAACA…ALIVGGAAVA (131 aa). The Cytoplasmic portion of the chain corresponds to 171 to 176; that stretch reads RRFARV. The chain crosses the membrane as a helical span at residues 177–198; it reads PTEVVAGFCLATAALSALCHIL. The Periplasmic portion of the chain corresponds to 199 to 208; that stretch reads FEPSVWPVGS. The chain crosses the membrane as a helical span at residues 209 to 233; that stretch reads EWLAVVALGIGPVGIAFYTWDIGMK. Residues 234–236 are Cytoplasmic-facing; that stretch reads RGD. A helical membrane pass occupies residues 237–258; it reads VRLLGVLSYAAPVLSTLLLVVA. Over 259 to 264 the chain is Periplasmic; it reads GFAAPS. Residues 265 to 284 form a helical membrane-spanning segment; the sequence is GALAIACALIVGGAAVATLL. Topologically, residues 285 to 287 are cytoplasmic; the sequence is ARR.

The protein belongs to the drug/metabolite transporter (DMT) superfamily. Aromatic amino acid/paraquat exporter (ArAA/P-E) (TC 2.A.7.17) family.

Its subcellular location is the cell inner membrane. The catalysed reaction is L-threonine(in) = L-threonine(out). The enzyme catalyses L-methionine(in) = L-methionine(out). It catalyses the reaction L-lysine(in) = L-lysine(out). It carries out the reaction L-glutamate(out) = L-glutamate(in). Amino acid transporter with broad substrate specificity. Can transport various amino acids, including L-threonine, L-methionine, L-lysine and L-glutamate. This is Aromatic amino acid exporter YddG from Ancylobacter novellus (strain ATCC 8093 / DSM 506 / JCM 20403 / CCM 1077 / IAM 12100 / NBRC 12443 / NCIMB 10456) (Starkeya novella).